Consider the following 486-residue polypeptide: MVQRLLPGAHICRRSFNSSAIIKSSALTLKEALENVIPKKRDAVKKLKACYGSTFVGPITISSVLGGMRGNQSMFWQGTSLDPEHGIKFQGLTIEECQNRLPNTGIDGDNFLPESMLWLLMTGGVPTFQQAASFRKELAIRGRKLPHYTEKVLSSLPKDMHPMTQLAIGLASMNKGSLFATNYQKGLIGKMEFWKDTLEDSLNLIASLPLLTGRIYSNITNEGHPLGQYSEEVDWCTNICSLLGMTNGTNSSNTCNLTSQQSLDFINLMRLYTGIHVDHEGGNVSAHTTHLVGSALSDPYLSYSSGIMGLAGPLHGLAAQEVVRFLIEMNSNISSIAREQEIKDYLWKILNSNRVIPGYGHAVLRKPDPRFTAMLEFAQKRPIEFENDKNVLLMQKLAEIAPKVLLEHGKSKNPFPNVDSASGILFYHYGIRELLFFTVIFGCSRAMGPLTQLVWDRILGLPIERPKSLNLEGLEALTKASNVNKL.

The transit peptide at 1-23 directs the protein to the mitochondrion; that stretch reads MVQRLLPGAHICRRSFNSSAIIK. Catalysis depends on residues His-315, His-361, and Asp-419. The Microbody targeting signal signature appears at 484 to 486; that stretch reads NKL.

It belongs to the citrate synthase family.

Its subcellular location is the mitochondrion. It catalyses the reaction oxaloacetate + acetyl-CoA + H2O = citrate + CoA + H(+). Its pathway is carbohydrate metabolism; tricarboxylic acid cycle; isocitrate from oxaloacetate: step 1/2. Its function is as follows. Dual specificity mitochondrial citrate and methylcitrate synthase with similar catalytic efficiency with both acetyl-CoA and propionyl-CoA. The polypeptide is Citrate synthase 3, mitochondrial (Saccharomyces cerevisiae (strain ATCC 204508 / S288c) (Baker's yeast)).